The primary structure comprises 100 residues: Cell division protein FtsB (100 aa).

At Met1 to Gln3 the chain is on the cytoplasmic side. A helical transmembrane segment spans residues Leu4–Leu21. The Periplasmic segment spans residues Gly22–Arg100. Positions Arg49–Asn73 form a coiled coil.

It belongs to the FtsB family. In terms of assembly, part of a complex composed of FtsB, FtsL and FtsQ.

Its subcellular location is the cell inner membrane. In terms of biological role, essential cell division protein. May link together the upstream cell division proteins, which are predominantly cytoplasmic, with the downstream cell division proteins, which are predominantly periplasmic. The sequence is that of Cell division protein FtsB from Shewanella frigidimarina (strain NCIMB 400).